Here is a 406-residue protein sequence, read N- to C-terminus: Acetate kinase (406 aa).

N7 is a Mg(2+) binding site. K14 lines the ATP pocket. R90 is a substrate binding site. Catalysis depends on D147, which acts as the Proton donor/acceptor. ATP contacts are provided by residues 207-211, 283-285, and 331-335; these read HLGNG, DMR, and GVGEN. E385 provides a ligand contact to Mg(2+).

It belongs to the acetokinase family. In terms of assembly, homodimer. Requires Mg(2+) as cofactor. Mn(2+) is required as a cofactor.

It is found in the cytoplasm. The enzyme catalyses acetate + ATP = acetyl phosphate + ADP. Its pathway is metabolic intermediate biosynthesis; acetyl-CoA biosynthesis; acetyl-CoA from acetate: step 1/2. In terms of biological role, catalyzes the formation of acetyl phosphate from acetate and ATP. Can also catalyze the reverse reaction. This is Acetate kinase from Thermosipho melanesiensis (strain DSM 12029 / CIP 104789 / BI429).